Reading from the N-terminus, the 192-residue chain is Ion-translocating oxidoreductase complex subunit B (192 aa).

Positions 1-26 are hydrophobic; the sequence is MNAIWIAVAAVSLLGLAFGAILGYAS. Residues 32 to 91 enclose the 4Fe-4S domain; sequence EDDPVVEKIDEILPQSQCGQCGYPGCRPYAEAISCNGEKINRCAPGGEAVMLKIAELLNV. Positions 49, 52, 57, 74, 117, 120, 123, 127, 147, 150, 153, and 157 each coordinate [4Fe-4S] cluster. 4Fe-4S ferredoxin-type domains follow at residues 108–137 and 138–167; these read MVAVIDENNCIGCTKCIQACPVDAIVGATR and AMHTVMSDLCTGCNLCVDPCPTHCISLQPV.

It belongs to the 4Fe4S bacterial-type ferredoxin family. RnfB subfamily. As to quaternary structure, the complex is composed of six subunits: RsxA, RsxB, RsxC, RsxD, RsxE and RsxG. [4Fe-4S] cluster is required as a cofactor.

It is found in the cell inner membrane. Functionally, part of a membrane-bound complex that couples electron transfer with translocation of ions across the membrane. Required to maintain the reduced state of SoxR. The chain is Ion-translocating oxidoreductase complex subunit B from Escherichia coli O127:H6 (strain E2348/69 / EPEC).